The primary structure comprises 364 residues: tRNA 2-selenouridine synthase (364 aa).

A Rhodanese domain is found at Leu14 to Ile137. Cys97 functions as the S-selanylcysteine intermediate in the catalytic mechanism.

The protein belongs to the SelU family. As to quaternary structure, monomer.

The catalysed reaction is 5-methylaminomethyl-2-thiouridine(34) in tRNA + selenophosphate + (2E)-geranyl diphosphate + H2O + H(+) = 5-methylaminomethyl-2-selenouridine(34) in tRNA + (2E)-thiogeraniol + phosphate + diphosphate. The enzyme catalyses 5-methylaminomethyl-2-thiouridine(34) in tRNA + (2E)-geranyl diphosphate = 5-methylaminomethyl-S-(2E)-geranyl-thiouridine(34) in tRNA + diphosphate. It carries out the reaction 5-methylaminomethyl-S-(2E)-geranyl-thiouridine(34) in tRNA + selenophosphate + H(+) = 5-methylaminomethyl-2-(Se-phospho)selenouridine(34) in tRNA + (2E)-thiogeraniol. It catalyses the reaction 5-methylaminomethyl-2-(Se-phospho)selenouridine(34) in tRNA + H2O = 5-methylaminomethyl-2-selenouridine(34) in tRNA + phosphate. In terms of biological role, involved in the post-transcriptional modification of the uridine at the wobble position (U34) of tRNA(Lys), tRNA(Glu) and tRNA(Gln). Catalyzes the conversion of 2-thiouridine (S2U-RNA) to 2-selenouridine (Se2U-RNA). Acts in a two-step process involving geranylation of 2-thiouridine (S2U) to S-geranyl-2-thiouridine (geS2U) and subsequent selenation of the latter derivative to 2-selenouridine (Se2U) in the tRNA chain. The protein is tRNA 2-selenouridine synthase of Shigella flexneri serotype 5b (strain 8401).